We begin with the raw amino-acid sequence, 220 residues long: Phosphoribosylformylglycinamidine synthase subunit PurQ (220 aa).

The Glutamine amidotransferase type-1 domain occupies 2–220 (RVGVVVFPGS…LRSVLAGAKV (219 aa)). The Nucleophile role is filled by cysteine 85. Catalysis depends on residues histidine 193 and glutamate 195.

In terms of assembly, part of the FGAM synthase complex composed of 1 PurL, 1 PurQ and 2 PurS subunits.

The protein resides in the cytoplasm. It catalyses the reaction N(2)-formyl-N(1)-(5-phospho-beta-D-ribosyl)glycinamide + L-glutamine + ATP + H2O = 2-formamido-N(1)-(5-O-phospho-beta-D-ribosyl)acetamidine + L-glutamate + ADP + phosphate + H(+). It carries out the reaction L-glutamine + H2O = L-glutamate + NH4(+). It participates in purine metabolism; IMP biosynthesis via de novo pathway; 5-amino-1-(5-phospho-D-ribosyl)imidazole from N(2)-formyl-N(1)-(5-phospho-D-ribosyl)glycinamide: step 1/2. Its function is as follows. Part of the phosphoribosylformylglycinamidine synthase complex involved in the purines biosynthetic pathway. Catalyzes the ATP-dependent conversion of formylglycinamide ribonucleotide (FGAR) and glutamine to yield formylglycinamidine ribonucleotide (FGAM) and glutamate. The FGAM synthase complex is composed of three subunits. PurQ produces an ammonia molecule by converting glutamine to glutamate. PurL transfers the ammonia molecule to FGAR to form FGAM in an ATP-dependent manner. PurS interacts with PurQ and PurL and is thought to assist in the transfer of the ammonia molecule from PurQ to PurL. This chain is Phosphoribosylformylglycinamidine synthase subunit PurQ, found in Rubrobacter xylanophilus (strain DSM 9941 / JCM 11954 / NBRC 16129 / PRD-1).